Consider the following 256-residue polypeptide: Phosphonates import ATP-binding protein PhnC (256 aa).

One can recognise an ABC transporter domain in the interval 7 to 251 (IEMKNVTKVY…VFDNIYNGGK (245 aa)). 40–47 (GLSGAGKS) provides a ligand contact to ATP.

It belongs to the ABC transporter superfamily. Phosphonates importer (TC 3.A.1.9.1) family. The complex is composed of two ATP-binding proteins (PhnC), two transmembrane proteins (PhnE) and a solute-binding protein (PhnD).

The protein resides in the cell membrane. The enzyme catalyses phosphonate(out) + ATP + H2O = phosphonate(in) + ADP + phosphate + H(+). Its function is as follows. Part of the ABC transporter complex PhnCDE involved in phosphonates import. Responsible for energy coupling to the transport system. The chain is Phosphonates import ATP-binding protein PhnC from Lactobacillus delbrueckii subsp. bulgaricus (strain ATCC 11842 / DSM 20081 / BCRC 10696 / JCM 1002 / NBRC 13953 / NCIMB 11778 / NCTC 12712 / WDCM 00102 / Lb 14).